A 488-amino-acid polypeptide reads, in one-letter code: Glutamyl-tRNA(Gln) amidotransferase subunit A (488 aa).

Active-site charge relay system residues include K77 and S152. The Acyl-ester intermediate role is filled by S176.

The protein belongs to the amidase family. GatA subfamily. Heterotrimer of A, B and C subunits.

The enzyme catalyses L-glutamyl-tRNA(Gln) + L-glutamine + ATP + H2O = L-glutaminyl-tRNA(Gln) + L-glutamate + ADP + phosphate + H(+). In terms of biological role, allows the formation of correctly charged Gln-tRNA(Gln) through the transamidation of misacylated Glu-tRNA(Gln) in organisms which lack glutaminyl-tRNA synthetase. The reaction takes place in the presence of glutamine and ATP through an activated gamma-phospho-Glu-tRNA(Gln). This chain is Glutamyl-tRNA(Gln) amidotransferase subunit A, found in Streptococcus agalactiae serotype III (strain NEM316).